The chain runs to 2210 residues: Mediator of RNA polymerase II transcription subunit 13-like (2210 aa).

Over residues Ser391–Thr400 the composition is skewed to polar residues. 3 disordered regions span residues Ser391 to Phe414, Ala435 to His489, and Val519 to Leu582. Positions Ser445–Ser458 are enriched in low complexity. The span at Lys468–Gln480 shows a compositional bias: basic and acidic residues. A compositionally biased stretch (polar residues) spans Ser533–Pro544. Over residues Pro551 to Ser560 the composition is skewed to pro residues. Phosphoserine is present on residues Ser553 and Ser560. The short motif at Leu669 to Leu673 is the LXXLL motif 1 element. Residues Gly736–Gly752 are compositionally biased toward basic and acidic residues. Residues Gly736 to Asn770 are disordered. 3 positions are modified to phosphoserine: Ser817, Ser826, and Ser923. A disordered region spans residues Pro1016–Glu1096. Over residues Asn1025–Gly1036 the composition is skewed to low complexity. Over residues Thr1077–Leu1092 the composition is skewed to polar residues. An LXXLL motif 2 motif is present at residues Leu1225–Leu1229. A leucine-zipper region spans residues Leu1380 to Leu1401. Disordered regions lie at residues Gln1530–Arg1656 and Gly2045–Arg2080. Residues Thr1531–Ser1608 are compositionally biased toward low complexity. Over residues Asn1615–Asn1629 the composition is skewed to polar residues. Over residues Asp1637–Gln1650 the composition is skewed to low complexity. Ser2083 bears the Phosphoserine mark.

The protein belongs to the Mediator complex subunit 13 family. In terms of assembly, component of the Mediator complex, which is composed of MED1, MED4, MED6, MED7, MED8, MED9, MED10, MED11, MED12, MED13, MED13L, MED14, MED15, MED16, MED17, MED18, MED19, MED20, MED21, MED22, MED23, MED24, MED25, MED26, MED27, MED29, MED30, MED31, CCNC, CDK8 and CDC2L6/CDK11. The MED12, MED13, CCNC and CDK8 subunits form a distinct module termed the CDK8 module. Mediator containing the CDK8 module is less active than Mediator lacking this module in supporting transcriptional activation. Individual preparations of the Mediator complex lacking one or more distinct subunits have been variously termed ARC, CRSP, DRIP, PC2, SMCC and TRAP. As to expression, highly expressed in brain (cerebellum), heart (aorta), skeletal muscle, kidney, placenta and peripheral blood leukocytes. Highly expressed in fetal brain.

It localises to the nucleus. Component of the Mediator complex, a coactivator involved in the regulated transcription of nearly all RNA polymerase II-dependent genes. Mediator functions as a bridge to convey information from gene-specific regulatory proteins to the basal RNA polymerase II transcription machinery. Mediator is recruited to promoters by direct interactions with regulatory proteins and serves as a scaffold for the assembly of a functional preinitiation complex with RNA polymerase II and the general transcription factors. This subunit may specifically regulate transcription of targets of the Wnt signaling pathway and SHH signaling pathway. This is Mediator of RNA polymerase II transcription subunit 13-like (MED13L) from Homo sapiens (Human).